Consider the following 243-residue polypeptide: Biosynthetic peptidoglycan transglycosylase (243 aa).

Residues 21 to 43 traverse the membrane as a helical segment; the sequence is LLIVSLVSALMSVLQVIVFRFVD.

This sequence belongs to the glycosyltransferase 51 family.

Its subcellular location is the cell inner membrane. The enzyme catalyses [GlcNAc-(1-&gt;4)-Mur2Ac(oyl-L-Ala-gamma-D-Glu-L-Lys-D-Ala-D-Ala)](n)-di-trans,octa-cis-undecaprenyl diphosphate + beta-D-GlcNAc-(1-&gt;4)-Mur2Ac(oyl-L-Ala-gamma-D-Glu-L-Lys-D-Ala-D-Ala)-di-trans,octa-cis-undecaprenyl diphosphate = [GlcNAc-(1-&gt;4)-Mur2Ac(oyl-L-Ala-gamma-D-Glu-L-Lys-D-Ala-D-Ala)](n+1)-di-trans,octa-cis-undecaprenyl diphosphate + di-trans,octa-cis-undecaprenyl diphosphate + H(+). Its pathway is cell wall biogenesis; peptidoglycan biosynthesis. In terms of biological role, peptidoglycan polymerase that catalyzes glycan chain elongation from lipid-linked precursors. In Xylella fastidiosa (strain Temecula1 / ATCC 700964), this protein is Biosynthetic peptidoglycan transglycosylase.